The primary structure comprises 465 residues: NADH-quinone oxidoreductase subunit N (465 aa).

13 helical membrane passes run 9-29, 44-64, 73-93, 110-130, 159-179, 198-218, 235-255, 265-285, 292-312, 327-347, 371-391, 405-427, and 444-464; these read FNFVLLFPVLSLLFWAIVLLL, ASIIALFSTLCFLLIYNGFVL, LFVSDNYAIFAQIVILVFSML, FLFMIASLILMISSTNLIVIF, YFTLAAVGAGFFVFACAFVYL, PILLCAGVMFLVIVGVKLSIA, FIAFISIVPKIAMIIVVLRIF, EYIVALLAIFSMLAVSIVALI, MLAYSSITHSSFILAVIVSSM, IFALFVYWISFAFANYGIFLI, IMLAIFILCIAGIPPFGIFWG, YALVFAVALSSMIMLYAYLKILI, and VKQKIILCLCLIGSVSCVFLL.

This sequence belongs to the complex I subunit 2 family. In terms of assembly, NDH-1 is composed of 14 different subunits. Subunits NuoA, H, J, K, L, M, N constitute the membrane sector of the complex.

The protein resides in the cell inner membrane. It carries out the reaction a quinone + NADH + 5 H(+)(in) = a quinol + NAD(+) + 4 H(+)(out). Functionally, NDH-1 shuttles electrons from NADH, via FMN and iron-sulfur (Fe-S) centers, to quinones in the respiratory chain. The immediate electron acceptor for the enzyme in this species is believed to be ubiquinone. Couples the redox reaction to proton translocation (for every two electrons transferred, four hydrogen ions are translocated across the cytoplasmic membrane), and thus conserves the redox energy in a proton gradient. This is NADH-quinone oxidoreductase subunit N from Campylobacter lari (strain RM2100 / D67 / ATCC BAA-1060).